A 710-amino-acid polypeptide reads, in one-letter code: Serine/threonine-protein phosphatase PP-Z2 (710 aa).

Residues 1-382 (MGNSGSKQHT…ADGDNGSRTN (382 aa)) are disordered. G2 carries N-myristoyl glycine lipidation. Over residues 15–27 (KKDDHDGDRKKTL) the composition is skewed to basic and acidic residues. A compositionally biased stretch (low complexity) spans 40–49 (SLKSSRSLRS). S55 and S71 each carry phosphoserine. Composition is skewed to polar residues over residues 62 to 77 (NVQA…SSTL) and 95 to 104 (PNNHYLTSHP). 2 stretches are compositionally biased toward low complexity: residues 105 to 125 (SSSR…NNNS) and 143 to 155 (NSTS…SFNS). Acidic residues predominate over residues 160–172 (LTDDDDDRGDDGG). Phosphothreonine is present on T161. 2 positions are modified to phosphoserine: S203 and S224. The segment covering 247–260 (SNRSNSHASSRKSS) has biased composition (low complexity). Residues 261-273 (FGSTGNTAYSTPL) are compositionally biased toward polar residues. The residue at position 271 (T271) is a Phosphothreonine. A Phosphoserine modification is found at S275. Residues 291-302 (DNVNGRGTSPIP) are compositionally biased toward polar residues. A Phosphoserine modification is found at S310. Residues D454, H456, D482, and N514 each coordinate Mn(2+). The active-site Proton donor is H515. Residues H563 and H638 each contribute to the Mn(2+) site.

This sequence belongs to the PPP phosphatase family. PP-Z subfamily. It depends on Mn(2+) as a cofactor.

The enzyme catalyses O-phospho-L-seryl-[protein] + H2O = L-seryl-[protein] + phosphate. The catalysed reaction is O-phospho-L-threonyl-[protein] + H2O = L-threonyl-[protein] + phosphate. In terms of biological role, essential for the maintenance of cell size and integrity in response to osmotic stress. The chain is Serine/threonine-protein phosphatase PP-Z2 (PPZ2) from Saccharomyces cerevisiae (strain ATCC 204508 / S288c) (Baker's yeast).